The following is a 1818-amino-acid chain: Integrin beta-4 (1818 aa).

Residues 1–28 (MAGPCCSPWVKLLLLAAMLSASLPGDLA) form the signal peptide. Topologically, residues 29 to 712 (NRCKKAQVKS…HKKKDCPPGS (684 aa)) are extracellular. The 45-residue stretch at 30 to 74 (RCKKAQVKSCTECIRVDKSCAYCTDELFKERRCNTQAELLAAGCR) folds into the PSI domain. Intrachain disulfides connect Cys-31-Cys-49, Cys-39-Cys-457, Cys-42-Cys-62, Cys-52-Cys-73, Cys-246-Cys-289, Cys-459-Cys-478, Cys-470-Cys-481, and Cys-483-Cys-492. The 179-residue stretch at 132–310 (DLYILMDFSN…KTQDYPSVPT (179 aa)) folds into the VWFA domain. Mg(2+)-binding residues include Ser-140 and Ser-142. Positions 142, 145, 146, and 177 each coordinate Ca(2+). Residues 195–200 (WPNSDP) are involved in NRG1- and IGF1-binding. Asn-229, Asp-231, Pro-233, and Glu-234 together coordinate Ca(2+). A Mg(2+)-binding site is contributed by Glu-234. Asn-328 carries N-linked (GlcNAc...) asparagine glycosylation. Ca(2+) is bound at residue Glu-351. 4 consecutive I-EGF domains span residues 459–493 (CELQKEVRSARCHFRGDFMCGHCVCNEGWSGKTCN), 494–539 (CSTG…HFCE), 540–576 (YDNFQCPRTSGFLCNDRGRCSMGECVCEPGWTGRSCD), and 577–617 (CPLS…TTCE). The Cell attachment site motif lies at 473 to 475 (RGD). Asn-493 carries N-linked (GlcNAc...) asparagine glycosylation. 11 disulfide bridges follow: Cys-494-Cys-522, Cys-505-Cys-520, Cys-514-Cys-525, Cys-527-Cys-538, Cys-545-Cys-559, Cys-553-Cys-564, Cys-566-Cys-575, Cys-577-Cys-600, Cys-584-Cys-598, Cys-592-Cys-603, and Cys-605-Cys-616. N-linked (GlcNAc...) asparagine glycosylation occurs at Asn-581. The N-linked (GlcNAc...) asparagine glycan is linked to Asn-619. Disulfide bonds link Cys-628-Cys-673, Cys-634-Cys-653, Cys-637-Cys-650, and Cys-682-Cys-708. Asn-697 carries an N-linked (GlcNAc...) asparagine glycan. The helical transmembrane segment at 713–733 (FWWLIPLLIFLLLLLALLLLL) threads the bilayer. Residues 734–751 (CWKYCACCKACLGLLPCC) form a palmitoylated on several cysteines region. Topologically, residues 734–1818 (CWKYCACCKA…THMDQQFFQT (1085 aa)) are cytoplasmic. Ser-773 carries the post-translational modification Phosphoserine. One can recognise a Calx-beta domain in the interval 981 to 1086 (VNITIIKEQA…QVRRFQVQLS (106 aa)). Residues 1005–1007 (RGD) carry the Cell attachment site motif. 2 positions are modified to phosphoserine: Ser-1071 and Ser-1121. The disordered stretch occupies residues 1115–1137 (INQTLSSPPPPHGDLGAPQNPNA). 2 Fibronectin type-III domains span residues 1131–1220 (APQN…THQE) and 1224–1323 (EPGR…TQPK). The segment at 1402 to 1433 (LSASSGRSDEDGSVAGGVEGEGSGWIRGATPR) is disordered. Residues 1415–1426 (VAGGVEGEGSGW) show a composition bias toward gly residues. Ser-1451, Ser-1454, and Ser-1470 each carry phosphoserine. Thr-1483 carries the post-translational modification Phosphothreonine. Residue Ser-1490 is modified to Phosphoserine. Residue Thr-1526 is modified to Phosphothreonine. 2 consecutive Fibronectin type-III domains span residues 1526–1621 (TPTR…VHPQ) and 1639–1735 (APGP…SQVG). The residue at position 1787 (Ser-1787) is a Phosphoserine.

The protein belongs to the integrin beta chain family. Heterodimer of an alpha and a beta subunit. Beta-4 associates with alpha-6. Interacts (via cytoplasmic region) with COL17A1 (via cytoplasmic region). Interacts (via cytoplasmic region) with DST isoform 3 (via N-terminus). Interacts (via cytoplasmic domain) with DST (via N-terminus). Interacts with RAC1. ITGA6:ITGB4 is found in a ternary complex with NRG1 and ERBB3. ITGA6:ITGB4 is found in a ternary complex with IGF1 and IGF1R. ITGA6:ITGB4 interacts with IGF2. Interacts with TMEM268; this interaction prevents ITGB4 degradation. In terms of processing, palmitoylated by DHHC3 at several cysteines of the membrane-proximal region, enhancing stability and cell surface expression. Palmitoylation also promotes secondary association with tertaspanins.

It is found in the cell membrane. Its subcellular location is the cell junction. The protein localises to the hemidesmosome. Functionally, integrin alpha-6/beta-4 is a receptor for laminin. It plays a critical structural role in the hemidesmosome of epithelial cells. Is required for the regulation of keratinocyte polarity and motility. ITGA6:ITGB4 binds to NRG1 (via EGF domain) and this binding is essential for NRG1-ERBB signaling. ITGA6:ITGB4 binds to IGF1 and this binding is essential for IGF1 signaling. ITGA6:ITGB4 binds to IGF2 and this binding is essential for IGF2 signaling. This Mus musculus (Mouse) protein is Integrin beta-4 (Itgb4).